A 401-amino-acid polypeptide reads, in one-letter code: Sorting nexin-4 (401 aa).

Residues 17–139 (FLQCLVTEPR…AFLENPNWNN (123 aa)) form the PX domain. Arg60, Ser62, Lys86, and Arg105 together coordinate a 1,2-diacyl-sn-glycero-3-phospho-(1D-myo-inositol-3-phosphate). The residue at position 62 (Ser62) is a Phosphoserine. The stretch at 190–292 (ISNLEGSIQK…DVEALQEYSA (103 aa)) forms a coiled coil.

Belongs to the sorting nexin family.

The protein resides in the cytoplasm. It is found in the cytosol. The protein localises to the preautophagosomal structure membrane. Its subcellular location is the endosome membrane. Its function is as follows. Sorting nexin, involved in the separation or division of vacuoles throughout the entire life cycle of the cells. Involved in retrieval of late-Golgi SNAREs from post-Golgi endosomes to the trans-Golgi network, for cytoplasm to vacuole transport (Cvt), and autophagy of large cargos including mitophagy, pexophagy and glycophagy. In Schizosaccharomyces pombe (strain 972 / ATCC 24843) (Fission yeast), this protein is Sorting nexin-4 (snx4).